A 268-amino-acid chain; its full sequence is Dioscorin DB3S (268 aa).

The region spanning D25–E259 is the Alpha-carbonic anhydrase domain. C50 and C209 form a disulfide bridge. H91 acts as the Proton acceptor in catalysis. Residues D92, H117–H119, Q136, and T205–A206 each bind L-ascorbate.

It belongs to the alpha-class carbonic anhydrase family. Monomer. Homodimer. Post-translationally, not glycosylated. As to expression, expressed in tuber (at protein level).

It catalyses the reaction hydrogencarbonate + H(+) = CO2 + H2O. The enzyme catalyses 2 monodehydro-L-ascorbate radical + NADH + H(+) = 2 L-ascorbate + NAD(+). Functionally, storage protein of tuber. Involved in protection against oxidative stress. Has carbonate dehydratase and weak trypsin inhibitor activity detected by measuring the dehydration of sodium bicarbonate and the inhibition of trypsin-catalyzed hydrolysis of N-benzoyl-L-arginine-4-nitro anilide, respectively. Contrarily, no carbonate dehydratase or trypsin inhibitor activity detected by measuring the hydrolysis of 4-nitrophenyl acetate or the inhibition of bovine trypsin-catalyzed hydrolysis of N-benzoyl-L-arginine ethyl ester, respectively. Has dehydroascorbate (DHA) reductase and monodehydroascorbate (MDA) reductase activities. Catalyzes the reactions of carbonate dehydratase and DHA reductase independently of zinc and glutathione (GSH). The coupled reaction is capable of recycling a plant antioxidant ascorbate using ubiquitous compounds H(2)O and CO(2). Exhibits antioxidant activity. Able to scavenge 1,1-diphenyl-2-picrylhydrazyl (DPPH) radical and hydroxyl radicals. Exhibits immunomodulatory activity. Activates Toll-like receptor 4 signaling pathways by up-regulating the gene expression of pro-inflammatory cytokines, such as tumor necrosis factor alpha, interleukin-1 beta and interleukin-6, and chemokines RANTES and MCP-1, in mouse RAW 264.7 macrophages. Stimulates the phagocytosis of E.coli by the LPS-treated mouse macrophages. The sequence is that of Dioscorin DB3S from Dioscorea polystachya (Chinese yam).